We begin with the raw amino-acid sequence, 165 residues long: Ribosome maturation factor RimM (165 aa).

Residues 94 to 165 (EDEFYIADLN…YGILNYKREV (72 aa)) enclose the PRC barrel domain.

It belongs to the RimM family. Binds ribosomal protein uS19.

Its subcellular location is the cytoplasm. An accessory protein needed during the final step in the assembly of 30S ribosomal subunit, possibly for assembly of the head region. Essential for efficient processing of 16S rRNA. May be needed both before and after RbfA during the maturation of 16S rRNA. It has affinity for free ribosomal 30S subunits but not for 70S ribosomes. This is Ribosome maturation factor RimM from Rickettsia canadensis (strain McKiel).